A 152-amino-acid polypeptide reads, in one-letter code: Psoriasis susceptibility 1 candidate gene 1 protein homolog (152 aa).

Residues 1–31 (MTCTDQKSHSQRALGTQTPALQGPQLLNTDP) show a composition bias toward polar residues. Disordered stretches follow at residues 1-39 (MTCT…TRPP) and 132-152 (APTL…SSLI).

This chain is Psoriasis susceptibility 1 candidate gene 1 protein homolog (PSORS1C1), found in Pan troglodytes (Chimpanzee).